The following is a 264-amino-acid chain: Acyl-[acyl-carrier-protein]--UDP-N-acetylglucosamine O-acyltransferase (264 aa).

This sequence belongs to the transferase hexapeptide repeat family. LpxA subfamily. As to quaternary structure, homotrimer.

The protein resides in the cytoplasm. It carries out the reaction a (3R)-hydroxyacyl-[ACP] + UDP-N-acetyl-alpha-D-glucosamine = a UDP-3-O-[(3R)-3-hydroxyacyl]-N-acetyl-alpha-D-glucosamine + holo-[ACP]. Its pathway is glycolipid biosynthesis; lipid IV(A) biosynthesis; lipid IV(A) from (3R)-3-hydroxytetradecanoyl-[acyl-carrier-protein] and UDP-N-acetyl-alpha-D-glucosamine: step 1/6. Involved in the biosynthesis of lipid A, a phosphorylated glycolipid that anchors the lipopolysaccharide to the outer membrane of the cell. This Rickettsia prowazekii (strain Madrid E) protein is Acyl-[acyl-carrier-protein]--UDP-N-acetylglucosamine O-acyltransferase.